The following is a 102-amino-acid chain: Large ribosomal subunit protein bL21 (102 aa).

Positions Lys80–Pro91 are enriched in basic residues. The segment at Lys80 to Ala102 is disordered.

It belongs to the bacterial ribosomal protein bL21 family. In terms of assembly, part of the 50S ribosomal subunit. Contacts protein L20.

This protein binds to 23S rRNA in the presence of protein L20. This is Large ribosomal subunit protein bL21 from Staphylococcus aureus (strain Mu3 / ATCC 700698).